Here is a 425-residue protein sequence, read N- to C-terminus: Enolase (425 aa).

Position 162 (Q162) interacts with (2R)-2-phosphoglycerate. E204 acts as the Proton donor in catalysis. Mg(2+)-binding residues include D241, E284, and D311. 4 residues coordinate (2R)-2-phosphoglycerate: K336, R365, S366, and K387. The active-site Proton acceptor is the K336.

This sequence belongs to the enolase family. It depends on Mg(2+) as a cofactor.

Its subcellular location is the cytoplasm. It localises to the secreted. The protein resides in the cell surface. It catalyses the reaction (2R)-2-phosphoglycerate = phosphoenolpyruvate + H2O. Its pathway is carbohydrate degradation; glycolysis; pyruvate from D-glyceraldehyde 3-phosphate: step 4/5. In terms of biological role, catalyzes the reversible conversion of 2-phosphoglycerate (2-PG) into phosphoenolpyruvate (PEP). It is essential for the degradation of carbohydrates via glycolysis. This chain is Enolase, found in Brucella abortus (strain S19).